A 382-amino-acid chain; its full sequence is MAAGSVGVFATDEKIGSLLDQSITRHFLSTVTDQQGKICAEYVWIGGSMHDVRSKSRTLSTIPTKPEDLPHWNYDGSSTGQAPGHDSEVYLIPRSIFKDPFRGGDNILVMCDCYEPPKVNPDGTLAAPKPIPTNTRFACAEVMEKAKKEEPWFGIEQEYTLLNAITKWPLGWPKGGYPAPQGPYYCSAGAGVAIGRDVAEVHYRLCLAAGVNISGVNAEVLPSQWEYQVGPCEGITMGDHMWMSRYIMYRVCEMFNVEVSFDPKPIPGDWNGSGGHTNYSTKATRTAPDGWKVIQEHCAKLEARHAVHIAAYGEGNERRLTGKHETSSMSDFSWGVANRGCSIRVGRMVPVEKSGYYEDRRPASNLDAYVVTRLIVETTILL.

Residues 36 to 118 form the GS beta-grasp domain; that stretch reads GKICAEYVWI…VMCDCYEPPK (83 aa). The GS catalytic domain maps to 135–382; sequence TRFACAEVME…RLIVETTILL (248 aa).

It belongs to the glutamine synthetase family. In terms of assembly, homooctamer.

Its subcellular location is the cytoplasm. It carries out the reaction L-glutamate + NH4(+) + ATP = L-glutamine + ADP + phosphate + H(+). This chain is Glutamine synthetase cytosolic isozyme (GLN1), found in Chlamydomonas reinhardtii (Chlamydomonas smithii).